We begin with the raw amino-acid sequence, 119 residues long: Large ribosomal subunit protein uL18 (119 aa).

Belongs to the universal ribosomal protein uL18 family. Part of the 50S ribosomal subunit; part of the 5S rRNA/L5/L18/L25 subcomplex. Contacts the 5S and 23S rRNAs.

Its function is as follows. This is one of the proteins that bind and probably mediate the attachment of the 5S RNA into the large ribosomal subunit, where it forms part of the central protuberance. The sequence is that of Large ribosomal subunit protein uL18 from Xanthomonas axonopodis pv. citri (strain 306).